The sequence spans 244 residues: CTD nuclear envelope phosphatase 1 (244 aa).

A helical membrane pass occupies residues 7–29 (LLGLRTFVAFAAKLWSFFIYLLR). Positions 57–224 (AQVKRKILVL…LNLLPMLDAL (168 aa)) constitute an FCP1 homology domain.

Belongs to the dullard family. As to quaternary structure, (Microbial infection) Interacts with Chandipura virus matrix protein. Interacts with CNEP1R1; the complex dephosphorylates LPIN1 and LPIN2. Muscle specific with lower expression in other metabolic tissues.

The protein localises to the endoplasmic reticulum membrane. Its subcellular location is the nucleus membrane. It catalyses the reaction O-phospho-L-seryl-[protein] + H2O = L-seryl-[protein] + phosphate. The enzyme catalyses O-phospho-L-threonyl-[protein] + H2O = L-threonyl-[protein] + phosphate. Serine/threonine protein phosphatase forming with CNEP1R1 an active phosphatase complex that dephosphorylates and may activate LPIN1 and LPIN2. LPIN1 and LPIN2 are phosphatidate phosphatases that catalyze the conversion of phosphatidic acid to diacylglycerol and control the metabolism of fatty acids at different levels. May indirectly modulate the lipid composition of nuclear and/or endoplasmic reticulum membranes and be required for proper nuclear membrane morphology and/or dynamics. May also indirectly regulate the production of lipid droplets and triacylglycerol. May antagonize BMP signaling. The polypeptide is CTD nuclear envelope phosphatase 1 (CTDNEP1) (Homo sapiens (Human)).